Here is a 623-residue protein sequence, read N- to C-terminus: NADPH-dependent diflavin oxidoreductase 1 (623 aa).

A Flavodoxin-like domain is found at 7 to 168 (IVILYGSETG…VYFEYEKKVL (162 aa)). FMN is bound by residues 13–18 (SETGNA), 60–63 (STTG), 106–115 (LGDSSYPKFN), and Asp142. One can recognise an FAD-binding FR-type domain in the interval 224–491 (ESLKVGRVNI…VGPGVGLAPL (268 aa)). FAD is bound by residues Arg383, 413–416 (RYYS), and 445–448 (GICT). NADP(+) is bound at residue 538-539 (SR). FAD is bound at residue Trp623.

The protein belongs to the NADPH-dependent diflavin oxidoreductase NDOR1 family. This sequence in the N-terminal section; belongs to the flavodoxin family. It in the C-terminal section; belongs to the flavoprotein pyridine nucleotide cytochrome reductase family. As to quaternary structure, interacts with DRE2; as part of the cytosolic iron-sulfur (Fe-S) protein assembly (CIA) machinery. The cofactor is FAD. It depends on FMN as a cofactor.

The protein resides in the cytoplasm. The protein localises to the mitochondrion. It catalyses the reaction 2 oxidized [2Fe-2S]-[protein] + NADPH = 2 reduced [2Fe-2S]-[protein] + NADP(+) + H(+). Functionally, NADPH-dependent reductase which is a central component of the cytosolic iron-sulfur (Fe-S) protein assembly (CIA) machinery. Transfers electrons from NADPH via its FAD and FMN prosthetic groups to the [2Fe-2S] cluster of DRE2, another key component of the CIA machinery. In turn, this reduced cluster provides electrons for assembly of cytosolic iron-sulfur cluster proteins. Positively controls H(2)O(2)-induced cell death. This is NADPH-dependent diflavin oxidoreductase 1 from Saccharomyces cerevisiae (strain ATCC 204508 / S288c) (Baker's yeast).